Here is a 192-residue protein sequence, read N- to C-terminus: Inner membrane protein YohD (192 aa).

The Periplasmic portion of the chain corresponds to 1–40; the sequence is MDLNTLISQYGYAALVIGSLAEGETVTLLGGVAAHQGLLK. A helical membrane pass occupies residues 41 to 61; the sequence is FPLVVLSVALGGMIGDQVLYL. Over 62–121 the chain is Cytoplasmic; the sequence is CGRRFGGKLLRRFSKHQDKIERAQKLIQRHPYLFVIGTRFMYGFRVIGPTLIGASQLPPK. The helical transmembrane segment at 122–142 threads the bilayer; that stretch reads IFLPLNILGAFAWALIFTTIG. The Periplasmic segment spans residues 143 to 159; sequence YAGGQVIAPWLHNLDQH. Residues 160–180 traverse the membrane as a helical segment; it reads LKHWVWLILVVVLVVGVRWWL. Over 181-192 the chain is Cytoplasmic; sequence KRRGKKKPDHQA.

This sequence belongs to the DedA family.

The protein localises to the cell inner membrane. This Escherichia coli (strain K12) protein is Inner membrane protein YohD (yohD).